Reading from the N-terminus, the 214-residue chain is Charged multivesicular body protein 2b (214 aa).

The stretch at 25 to 55 forms a coiled coil; that stretch reads QRQIARDRTALEKQEKQLEMEIKKMAKTGNR. The tract at residues 178–199 is disordered; sequence MAHAPSAARKTPSAATAKADGI. The MIT-interacting motif signature appears at 202–212; that stretch reads EDIERQLKALG.

This sequence belongs to the SNF7 family. In terms of assembly, probable core component of the endosomal sorting required for transport complex III (ESCRT-III). ESCRT-III components are thought to multimerize to form a flat lattice on the perimeter membrane of the endosome.

Its subcellular location is the cytoplasm. The protein localises to the cytosol. It localises to the late endosome membrane. In terms of biological role, probable core component of the endosomal sorting required for transport complex III (ESCRT-III) which is involved in multivesicular bodies (MVBs) formation and sorting of endosomal cargo proteins into MVBs. MVBs contain intraluminal vesicles (ILVs) that are generated by invagination and scission from the limiting membrane of the endosome and mostly are delivered to lysosomes enabling degradation of membrane proteins, such as stimulated growth factor receptors, lysosomal enzymes and lipids. This Danio rerio (Zebrafish) protein is Charged multivesicular body protein 2b (chmp2b).